The sequence spans 280 residues: 2,3,4,5-tetrahydropyridine-2,6-dicarboxylate N-succinyltransferase (280 aa).

Arg109 and Asp146 together coordinate substrate.

It belongs to the transferase hexapeptide repeat family. Homotrimer.

It localises to the cytoplasm. It carries out the reaction (S)-2,3,4,5-tetrahydrodipicolinate + succinyl-CoA + H2O = (S)-2-succinylamino-6-oxoheptanedioate + CoA. It participates in amino-acid biosynthesis; L-lysine biosynthesis via DAP pathway; LL-2,6-diaminopimelate from (S)-tetrahydrodipicolinate (succinylase route): step 1/3. In Blochmanniella floridana, this protein is 2,3,4,5-tetrahydropyridine-2,6-dicarboxylate N-succinyltransferase.